A 28-amino-acid polypeptide reads, in one-letter code: VGCEEDPMHCKGKQAKPTCCNGVCNCNV.

It belongs to the short scorpion toxin superfamily. Potassium channel inhibitor family. Alpha-KTx 09 subfamily. Expressed by the venom gland.

It localises to the secreted. Blocks potassium channels. This is Peptide 2 from Hottentotta tamulus sindicus (Scorpion).